Here is a 378-residue protein sequence, read N- to C-terminus: Erythronate-4-phosphate dehydrogenase (378 aa).

Substrate-binding residues include Ser-45 and Thr-66. NAD(+) contacts are provided by Asp-146 and Thr-175. Residue Arg-208 is part of the active site. Position 232 (Asp-232) interacts with NAD(+). Residue Glu-237 is part of the active site. His-254 (proton donor) is an active-site residue. Gly-257 contacts NAD(+). Tyr-258 is a substrate binding site.

This sequence belongs to the D-isomer specific 2-hydroxyacid dehydrogenase family. PdxB subfamily. As to quaternary structure, homodimer.

Its subcellular location is the cytoplasm. It catalyses the reaction 4-phospho-D-erythronate + NAD(+) = (R)-3-hydroxy-2-oxo-4-phosphooxybutanoate + NADH + H(+). The protein operates within cofactor biosynthesis; pyridoxine 5'-phosphate biosynthesis; pyridoxine 5'-phosphate from D-erythrose 4-phosphate: step 2/5. In terms of biological role, catalyzes the oxidation of erythronate-4-phosphate to 3-hydroxy-2-oxo-4-phosphonooxybutanoate. The protein is Erythronate-4-phosphate dehydrogenase of Escherichia coli O45:K1 (strain S88 / ExPEC).